The sequence spans 174 residues: Disulfide bond formation protein B (174 aa).

Residues 1 to 17 lie on the Cytoplasmic side of the membrane; it reads MSFQVVTGWLDNSPRRI. The chain crosses the membrane as a helical span at residues 18–34; the sequence is FAFVSLASIGMLAFGQY. The Periplasmic portion of the chain corresponds to 35–52; it reads LQHVVGLEPCPMCIVQRY. An intrachain disulfide couples Cys-44 to Cys-47. A helical membrane pass occupies residues 53–67; that stretch reads ALVLVAIIAGLTGAS. Over 68 to 74 the chain is Cytoplasmic; sequence GRKGLHL. Residues 75-92 traverse the membrane as a helical segment; sequence GGAVLMLGSSGFGAYVAA. The Periplasmic portion of the chain corresponds to 93–148; the sequence is RQSWLQWYPPEVVSCGRDFYGMIETFPLQRAIPMIFKGSGDCSKVDWTFLGGSIAN. Residues Cys-107 and Cys-134 are joined by a disulfide bond. A helical transmembrane segment spans residues 149–167; sequence WTFVVFGLIVLLSLALIWR. At 168–174 the chain is on the cytoplasmic side; it reads RVSRRVS.

It belongs to the DsbB family.

It localises to the cell inner membrane. Required for disulfide bond formation in some periplasmic proteins. Acts by oxidizing the DsbA protein. The polypeptide is Disulfide bond formation protein B (Albidiferax ferrireducens (strain ATCC BAA-621 / DSM 15236 / T118) (Rhodoferax ferrireducens)).